A 508-amino-acid polypeptide reads, in one-letter code: UDP-N-acetylmuramoylalanine--D-glutamate ligase (508 aa).

Glycine 138 to threonine 144 lines the ATP pocket.

Belongs to the MurCDEF family.

It is found in the cytoplasm. The catalysed reaction is UDP-N-acetyl-alpha-D-muramoyl-L-alanine + D-glutamate + ATP = UDP-N-acetyl-alpha-D-muramoyl-L-alanyl-D-glutamate + ADP + phosphate + H(+). The protein operates within cell wall biogenesis; peptidoglycan biosynthesis. Functionally, cell wall formation. Catalyzes the addition of glutamate to the nucleotide precursor UDP-N-acetylmuramoyl-L-alanine (UMA). This is UDP-N-acetylmuramoylalanine--D-glutamate ligase from Bordetella avium (strain 197N).